The sequence spans 1025 residues: Myosin phosphatase Rho-interacting protein (1025 aa).

The tract at residues 2–383 (SAAKENPCRK…DRRSTEPSVT (382 aa)) is interaction with F-actin. The region spanning 43–150 (KPIYGGWLLL…WLEMLMVYPR (108 aa)) is the PH 1 domain. 2 disordered regions span residues 152 to 302 (NKQN…RRSQ) and 317 to 383 (HMET…PSVT). A compositionally biased stretch (low complexity) spans 179-189 (SSSSSSSSSSS). Phosphoserine is present on residues serine 192, serine 217, serine 218, serine 220, serine 224, and serine 226. Positions 217-236 (SSLSPAQSPSQSQPPAASSL) are enriched in low complexity. Residues 239–263 (PGLESKEEESAMSSDRMDCGRKVRV) show a composition bias toward basic and acidic residues. Serine 265 and serine 269 each carry phosphoserine. A compositionally biased stretch (basic and acidic residues) spans 271-281 (EKTKQDLKAEE). Residues 284–294 (LPPPLSPPSPS) show a composition bias toward pro residues. Serine 289 and serine 292 each carry phosphoserine. Threonine 295 carries the post-translational modification Phosphothreonine. Serine 326 carries the post-translational modification Phosphoserine. Basic and acidic residues predominate over residues 332 to 348 (RQGRSEKRAFPRKRDFT). Threonine 348 is subject to Phosphothreonine. Residues serine 362 and serine 365 each carry the phosphoserine modification. Positions 387 to 483 (LNFKKGWLTK…WIQTIMKHVH (97 aa)) constitute a PH 2 domain. Disordered stretches follow at residues 485–545 (TTAP…TFDW) and 560–591 (VGGV…RREE). At serine 493 the chain carries Phosphoserine. 2 stretches are compositionally biased toward basic and acidic residues: residues 524–545 (PEQK…TFDW) and 567–589 (DTHE…ARRR). The segment at 546–824 (AEFRPIQQAL…SVQRELEVLS (279 aa)) is interaction with RHOA. A Phosphoserine modification is found at serine 619. Threonine 646 is modified (phosphothreonine). 2 positions are modified to phosphoserine: serine 663 and serine 800. Residues 673-977 (HELTSLLEKE…AATEALGEKS (305 aa)) adopt a coiled-coil conformation. The tract at residues 824–879 (SEQYSQKCLENAHLAQALEAERQALRQCQRENQELNAHNQELNNRLAAEITRLRTL) is interaction with PPP1R12A. A phosphoserine mark is found at serine 891, serine 977, serine 993, serine 1014, and serine 1016.

As to quaternary structure, binds F-actin through its N-terminus. Interacts with MYZAP. Binds RHOA, PPP1R12A/MBS and PPP1R12C/MBS85 through adjacent coiled coil domains.

It is found in the cytoplasm. The protein localises to the cytoskeleton. Its function is as follows. Targets myosin phosphatase to the actin cytoskeleton. Required for the regulation of the actin cytoskeleton by RhoA and ROCK1. Depletion leads to an increased number of stress fibers in smooth muscle cells through stabilization of actin fibers by phosphorylated myosin. Overexpression of MRIP as well as its F-actin-binding region leads to disassembly of stress fibers in neuronal cells. This chain is Myosin phosphatase Rho-interacting protein (MPRIP), found in Homo sapiens (Human).